Consider the following 218-residue polypeptide: UPF0598 protein C8orf82 homolog (218 aa).

Belongs to the UPF0598 family.

The protein is UPF0598 protein C8orf82 homolog of Mus musculus (Mouse).